The following is a 434-amino-acid chain: D-amino acid dehydrogenase (434 aa).

3 to 17 (VLVLGSGVIGTASAY) lines the FAD pocket.

This sequence belongs to the DadA oxidoreductase family. Requires FAD as cofactor.

The catalysed reaction is a D-alpha-amino acid + A + H2O = a 2-oxocarboxylate + AH2 + NH4(+). It participates in amino-acid degradation; D-alanine degradation; NH(3) and pyruvate from D-alanine: step 1/1. In terms of biological role, oxidative deamination of D-amino acids. This Pseudomonas putida (strain ATCC 700007 / DSM 6899 / JCM 31910 / BCRC 17059 / LMG 24140 / F1) protein is D-amino acid dehydrogenase.